Consider the following 956-residue polypeptide: MAM domain-containing glycosylphosphatidylinositol anchor protein 1 (956 aa).

The signal sequence occupies residues 1-18 (MEVTCLLLLALIPFHCRG). 2 Ig-like domains span residues 24-123 (PAQA…KSIR) and 132-230 (PVLT…KSIT). An N-linked (GlcNAc...) asparagine glycan is attached at Asn42. 2 cysteine pairs are disulfide-bonded: Cys60/Cys108 and Cys157/Cys214. N-linked (GlcNAc...) asparagine glycosylation is found at Asn235, Asn257, and Asn307. Ig-like domains follow at residues 240–323 (PTLK…KTVN), 338–432 (PDMI…VEVN), 440–534 (PTIS…VQLT), and 539–632 (PEVE…FQVS). 4 disulfides stabilise this stretch: Cys262/Cys308, Cys357/Cys415, Cys463/Cys514, and Cys560/Cys616. A Fibronectin type-III domain is found at 644–744 (TPNPTRSHKL…SRVIHYTEPI (101 aa)). In terms of domain architecture, MAM spans 752-919 (NTCHFEDEKI…VTLKKGECPR (168 aa)). Over residues 780–789 (LTQNPKRSPN) the composition is skewed to polar residues. The interval 780 to 799 (LTQNPKRSPNTGPPTDISGT) is disordered. A lipid anchor (GPI-anchor amidated serine) is attached at Ser933. Residues 934–956 (GAPRLSSLQLWGSMTIFLLALQR) constitute a propeptide, removed in mature form.

Interacts heterophilically through its MAM domain with proteins in axon-rich regions and through its Ig-like domains with proteins in differentiating muscle. Interacts (through the Ig-like domains) with NLGN2. In terms of tissue distribution, high levels detected in developing central and peripheral nervous systems with little expression elsewhere. In brain, highest levels in cerebral cortex and hindbrain at E15. At postnatal day 1, highest levels in basilar pons and superficial layers of the neocortex. In the developing spinal cord, restricted to a subpopulation of neurons in the dorsal and spinal ventral cord, probably D1 interneurons. Expressed in brain.

It localises to the cell membrane. Its function is as follows. Required for radial migration of cortical neurons in the superficial layer of the neocortex. Plays a role in the formation or maintenance of inhibitory synapses. May function by inhibiting the activity of NLGN2. This chain is MAM domain-containing glycosylphosphatidylinositol anchor protein 1 (Mdga1), found in Rattus norvegicus (Rat).